The sequence spans 295 residues: Defective in cullin neddylation protein AAR3 (295 aa).

The DCUN1 domain maps to 1–180 (MDSSPVSARF…LIDDFVEHMY (180 aa)). Residues 214 to 221 (YRRPHTGL) carry the Nuclear localization signal motif. The segment at 214-251 (YRRPHTGLRNIPGLKRKTSKKNDEEEEDEDEEVLETQN) is disordered. The span at 237–247 (EEEEDEDEEVL) shows a compositional bias: acidic residues.

It is found in the nucleus. Its function is as follows. May contribute to the neddylation of all cullins by transferring NEDD8 from N-terminally acetylated NEDD8-conjugating E2s enzyme to different cullin C-terminal domain-RBX complexes; neddylation of cullins play an essential role in the regulation of SCF-type complexes activity. Regulates responses to the synthetic auxin 2,4-dichlorophenoxyacetic acid (2,4-D) in roots, probably by modulating the SCF(TIR1) ubiquitin E3 ligase complex-mediated proteolysis. The chain is Defective in cullin neddylation protein AAR3 from Arabidopsis thaliana (Mouse-ear cress).